We begin with the raw amino-acid sequence, 134 residues long: Acyl carrier protein, chloroplastic (134 aa).

Residues 1–51 (MSTTFCSSVSMQATSLAATTRISFQKPALVSRTNLSFNLSRSIPTRLSVSC) constitute a chloroplast transit peptide. Positions 55-130 (PETVEKVSKI…EAAELIDELV (76 aa)) constitute a Carrier domain. Ser90 is modified (O-(pantetheine 4'-phosphoryl)serine).

Belongs to the acyl carrier protein (ACP) family. Post-translationally, 4'-phosphopantetheine is transferred from CoA to a specific serine of apo-ACP by acpS. This modification is essential for activity because fatty acids are bound in thioester linkage to the sulfhydryl of the prosthetic group. In terms of tissue distribution, seed.

Its subcellular location is the plastid. The protein resides in the chloroplast. The protein operates within lipid metabolism; fatty acid biosynthesis. Carrier of the growing fatty acid chain in fatty acid biosynthesis. The sequence is that of Acyl carrier protein, chloroplastic (ACL1.A1) from Brassica napus (Rape).